The sequence spans 431 residues: MVPTRNRPMLRILGFFICAAFIYLSFRDLWLNHKGKAKLGFVKRNGTQFVVDDKPLYVNGWNSYWFMDHAVDEHSRNLVGEMLEAGAKMGLTVCRTWAFNDGGYNALQISPGRFDERVFQALDHVIAEARKHDVRLLLSLVNNLQAYGGKTQYVKWAWQEGVGLSSSNDSFFFDPSIRNYFKNYLKVLLTRKNSVTGIEYRNDPTIFAWELINEPRCTTDVSGKTLQDWIDEMTGFIKSIDDKHLLTVGLEGFYGPNSPKGLTVNPEQWASQLGTDFVQNSNSSNIDFASVHIYPDHWFHNQTFEEKLKFVVKWMQSHIEDGLKELKKPVLFTEFGLSNQNKDYEPSQRDKFYRIIFDVVYKSAKRKKSGAGTLVWQLFMEGMETFNDDFGIVPHEQDSIYKLMIEQSCRLGKVTGRLKEQKLKELCSHRH.

The N-terminal stretch at 1–24 (MVPTRNRPMLRILGFFICAAFIYL) is a signal peptide. N-linked (GlcNAc...) asparagine glycosylation is present at Asn-45. Residue Trp-97 coordinates substrate. Asn-168 carries N-linked (GlcNAc...) asparagine glycosylation. Asn-213 provides a ligand contact to substrate. The active-site Proton donor is the Glu-214. A glycan (N-linked (GlcNAc...) asparagine) is linked at Asn-282. Tyr-294 is a binding site for substrate. Asn-301 carries N-linked (GlcNAc...) asparagine glycosylation. Residue Glu-334 is the Nucleophile of the active site. Residue Trp-376 participates in substrate binding.

Belongs to the glycosyl hydrolase 5 (cellulase A) family. In terms of tissue distribution, expressed in stems.

It is found in the secreted. The catalysed reaction is Random hydrolysis of (1-&gt;4)-beta-D-mannosidic linkages in mannans, galactomannans and glucomannans.. The sequence is that of Mannan endo-1,4-beta-mannosidase 5 (MAN5) from Arabidopsis thaliana (Mouse-ear cress).